The primary structure comprises 590 residues: MKREYHHPHHPTCSTSPTGKGKMWDADPQQDAGMDELLAVLGYNVKASDMAEVAQKLEQLEEVIVNAQEDGLSHLASETVHYNPSDLSNWLGSMLSEFNPTPNCALDNPFLPPISPLDYTNCSTQPKQEPSIFDSPSLDYDLKAIPGKALYSHIEQPPQQPPAPPLYQRDNKRLKPTTSATANSVSSVIGGWGVPTESARPVVLVDSQETGIRLVHTLMACAEAVQQENLKLAEALVKQIGFLAVSQAGAMRKVATYFAEGLARRIYRLYPDKPLDSSFSDILQMHFYETCPYLKFAHFTANQAILEAFEGKKRVHVIDFSMKQGMQWPALMQALALRPGGPPSFRLTGIGPPSTDNTDHLHEVGWKLAQLAETIHVEFEYRGFVANSLADLDASMLELRDGESVAVNSVFELHSLLARPGGIERVLSAVKDMKPDIVTIVEQEANHNGPVFLDRFTESLHYYSTLFDSLEGCGVSPVNTQDKLMSEVYLGQQICNVVACEGPERVERHETLAQWRARLGSAGFDPVNLGSNAFKQASMLLALFAGGDGYRVEENNGCLMLGWHTRPLIATSAWQLANKPALPSSTPASN.

Residues 1–10 (MKREYHHPHH) show a composition bias toward basic residues. Residues 1 to 28 (MKREYHHPHHPTCSTSPTGKGKMWDADP) are disordered. Residues 35-39 (DELLA) carry the DELLA motif motif. A disordered region spans residues 153–182 (HIEQPPQQPPAPPLYQRDNKRLKPTTSATA). Residues 205–575 (VDSQETGIRL…RPLIATSAWQ (371 aa)) enclose the GRAS domain. The leucine repeat I (LRI) stretch occupies residues 212–266 (IRLVHTLMACAEAVQQENLKLAEALVKQIGFLAVSQAGAMRKVATYFAEGLARRI). Residues 284–349 (QMHFYETCPY…GGPPSFRLTG (66 aa)) form a VHIID region. The short motif at 315–319 (VHVID) is the VHIID element. Residues 363–395 (EVGWKLAQLAETIHVEFEYRGFVANSLADLDAS) are leucine repeat II (LRII). The segment at 405-496 (VAVNSVFELH…EVYLGQQICN (92 aa)) is PFYRE. Residues 413 to 417 (LHSLL) carry the LXXLL motif motif. The interval 499 to 575 (ACEGPERVER…RPLIATSAWQ (77 aa)) is SAW.

It belongs to the GRAS family. DELLA subfamily. Phosphorylated. In terms of processing, ubiquitinated. Upon GA application it is ubiquitinated, leading to its subsequent degradation.

It localises to the nucleus. Functionally, probable transcriptional regulator that acts as a repressor of the gibberellin (GA) signaling pathway. Probably acts by participating in large multiprotein complexes that repress transcription of GA-inducible genes. Upon GA application, it is degraded by the proteasome, allowing the GA signaling pathway. This chain is DELLA protein GAI1 (GAI1), found in Vitis vinifera (Grape).